Reading from the N-terminus, the 68-residue chain is Conotoxin tx3b (68 aa).

A signal peptide spans 1-19; it reads MSKLGALLTICLLLFSLTA. Positions 20–52 are excised as a propeptide; sequence VPLDGDQHADQPAQRLQDRIPTEDHPLFDPNKR. Cystine bridges form between cysteine 53/cysteine 67, cysteine 54/cysteine 63, and cysteine 59/cysteine 66. Methionine 61 carries the methionine sulfoxide; partial modification. A Cysteine amide modification is found at cysteine 67.

As to expression, expressed by the venom duct.

The protein localises to the secreted. Intracranial injection into mice causes scratching, hyperactivity and circular motion. This is Conotoxin tx3b from Conus textile (Cloth-of-gold cone).